The chain runs to 268 residues: Probable ribosomal RNA small subunit methyltransferase A (268 aa).

6 residues coordinate S-adenosyl-L-methionine: His-23, Leu-25, Gly-50, Glu-71, Asp-95, and Asn-110.

It belongs to the class I-like SAM-binding methyltransferase superfamily. rRNA adenine N(6)-methyltransferase family. RsmA subfamily.

It localises to the cytoplasm. Its function is as follows. Specifically dimethylates two adjacent adenosines in the loop of a conserved hairpin near the 3'-end of 16S rRNA in the 30S particle. May play a critical role in biogenesis of 30S subunits. The polypeptide is Probable ribosomal RNA small subunit methyltransferase A (Pyrococcus horikoshii (strain ATCC 700860 / DSM 12428 / JCM 9974 / NBRC 100139 / OT-3)).